The primary structure comprises 798 residues: Penicillin-binding protein 1A (798 aa).

The Cytoplasmic portion of the chain corresponds to 1–9 (MIKKIITTC). Residues 10–30 (MGLNNGLALFGVGLIAIAILV) traverse the membrane as a helical; Signal-anchor for type II membrane protein segment. At 31 to 798 (TYPKLPSLDS…NNRQQLDSLF (768 aa)) the chain is on the periplasmic side. The tract at residues 50-218 (LTIYSSDGQV…SAYNPIVNPE (169 aa)) is transglycosylase. Residue glutamate 88 is the Proton donor; for transglycosylase activity of the active site. A transpeptidase region spans residues 413-699 (TVVQEPLLQG…GTIAVPVWVE (287 aa)). Residue serine 460 is the Acyl-ester intermediate; for transpeptidase activity of the active site. The interval 734-798 (TSSDLALDNS…NNRQQLDSLF (65 aa)) is disordered. Over residues 782–798 (LPSNTGNNNRQQLDSLF) the composition is skewed to polar residues.

It in the N-terminal section; belongs to the glycosyltransferase 51 family. The protein in the C-terminal section; belongs to the transpeptidase family.

It is found in the cell inner membrane. It catalyses the reaction [GlcNAc-(1-&gt;4)-Mur2Ac(oyl-L-Ala-gamma-D-Glu-L-Lys-D-Ala-D-Ala)](n)-di-trans,octa-cis-undecaprenyl diphosphate + beta-D-GlcNAc-(1-&gt;4)-Mur2Ac(oyl-L-Ala-gamma-D-Glu-L-Lys-D-Ala-D-Ala)-di-trans,octa-cis-undecaprenyl diphosphate = [GlcNAc-(1-&gt;4)-Mur2Ac(oyl-L-Ala-gamma-D-Glu-L-Lys-D-Ala-D-Ala)](n+1)-di-trans,octa-cis-undecaprenyl diphosphate + di-trans,octa-cis-undecaprenyl diphosphate + H(+). It carries out the reaction Preferential cleavage: (Ac)2-L-Lys-D-Ala-|-D-Ala. Also transpeptidation of peptidyl-alanyl moieties that are N-acyl substituents of D-alanine.. The protein operates within cell wall biogenesis; peptidoglycan biosynthesis. Its function is as follows. Cell wall formation. Synthesis of cross-linked peptidoglycan from the lipid intermediates. The enzyme has a penicillin-insensitive transglycosylase N-terminal domain (formation of linear glycan strands) and a penicillin-sensitive transpeptidase C-terminal domain (cross-linking of the peptide subunits). The protein is Penicillin-binding protein 1A (mrcA) of Neisseria flavescens.